The following is a 318-amino-acid chain: tRNA uridine(34) hydroxylase (318 aa).

The 95-residue stretch at 123–217 folds into the Rhodanese domain; the sequence is EDDDTVIIDA…YGKDPETKGE (95 aa). Cysteine 177 functions as the Cysteine persulfide intermediate in the catalytic mechanism.

Belongs to the TrhO family.

It carries out the reaction uridine(34) in tRNA + AH2 + O2 = 5-hydroxyuridine(34) in tRNA + A + H2O. In terms of biological role, catalyzes oxygen-dependent 5-hydroxyuridine (ho5U) modification at position 34 in tRNAs. In Staphylococcus aureus (strain MSSA476), this protein is tRNA uridine(34) hydroxylase.